Reading from the N-terminus, the 237-residue chain is MAPKKVLLALTSYNDVFYSDGAKTGVFVVEALHPFNTFRKEGFEVDFVSETGKFGWDEHSLAKDFLNGQDETDFKNKDSDFNKTLAKIKTPKEVNADDYQIFFASAGHGTLFDYPKAKDLQDIASEIYANGGVVAAVCHGPAIFDGLTDKKTGRPLIEGKSITGFTDVGETILGVDSILKAKNLATVEDVAKKYGAKYLAPVGPWDDYSITDGRLVTGVNPASAHSTAVRSIDALKN.

Catalysis depends on residues Cys138, His139, and Glu170. Residue Cys138 is modified to Cysteine sulfinic acid (-SO2H).

Belongs to the peptidase C56 family. HSP31-like subfamily. In terms of assembly, homodimer. In terms of processing, cys-138 is easily oxidized to sulfinic acid.

Its subcellular location is the cytoplasm. The protein resides in the P-body. It catalyses the reaction methylglyoxal + H2O = (R)-lactate + H(+). In terms of biological role, catalyzes the conversion of methylglyoxal (MG) to D-lactate in a single glutathione (GSH)-independent step. May play a role in detoxifying endogenously produced glyoxals. Involved in protection against reactive oxygen species (ROS). Important for viability in stationary phase. May negatively regulate TORC1 in response to nutrient limitation. The protein is Glutathione-independent glyoxalase HSP31 of Saccharomyces cerevisiae (strain ATCC 204508 / S288c) (Baker's yeast).